The following is a 70-amino-acid chain: Conotoxin elongated-tx3a-a (70 aa).

A signal peptide spans 1–24; it reads MLKMGVVLFIFLVLFPLATLQLDA. Residues 25–44 constitute a propeptide that is removed on maturation; it reads DQPVERYAENKQLLSPDERR. Cystine bridges form between Cys55/Cys68, Cys56/Cys66, and Cys61/Cys69. Trp58 carries the 6'-bromotryptophan; partial modification. Cys69 is subject to Cysteine amide; partial.

This sequence belongs to the conotoxin M superfamily. Two short peptides are produced from this precursor; Conotoxin tx3a-b is amidated at Cys-69 (but has no bromotryptophan), whereas conotoxin tx3a-a has an unmodified Gly-70 and a bromotryptophan. Two elongated peptides are also produced; Conotoxin elongated-tx3a-b is amidated at Cys-69 (but has no bromotryptophan), whereas conotoxin elongated tx3a-a has an unmodified Gly-70 (but has no bromotryptophan). Post-translationally, ju et al. (2022) describe a disulfide connectivity (C55-C61; C56-C69; C66-C68) that differs from that of Han and colleagues (2006), McDougal et al. (2008), and Ueberheide et al. (2009). Expressed by the venom duct. Is present in all duct parts with a highest content in part 2 (proximal of the venom bulb) and then decreases in concentration toward the end of the duct.

The protein localises to the secreted. Its function is as follows. Intracranial injection into mice causes scratching and hyperactivity. In vitro, inhibits proliferation of the mice ovarian cancer cells ID8. The sequence is that of Conotoxin elongated-tx3a-a from Conus textile (Cloth-of-gold cone).